A 294-amino-acid polypeptide reads, in one-letter code: Acetylglutamate kinase (294 aa).

Substrate is bound by residues 69 to 70 (GG), Arg-91, and Asn-190.

This sequence belongs to the acetylglutamate kinase family. ArgB subfamily.

It is found in the cytoplasm. It carries out the reaction N-acetyl-L-glutamate + ATP = N-acetyl-L-glutamyl 5-phosphate + ADP. It functions in the pathway amino-acid biosynthesis; L-arginine biosynthesis; N(2)-acetyl-L-ornithine from L-glutamate: step 2/4. In terms of biological role, catalyzes the ATP-dependent phosphorylation of N-acetyl-L-glutamate. The protein is Acetylglutamate kinase of Mycobacterium tuberculosis (strain CDC 1551 / Oshkosh).